The following is a 346-amino-acid chain: RNA polymerase II holoenzyme cyclin-like subunit (346 aa).

The region spanning 59–158 (NLLIKLGRRL…EMDSYLFLHH (100 aa)) is the Cyclin N-terminal domain.

The protein belongs to the cyclin family. Cyclin C subfamily. As to quaternary structure, component of the SRB8-11 complex, a regulatory module of the Mediator complex.

Its subcellular location is the nucleus. In terms of biological role, component of the SRB8-11 complex. The SRB8-11 complex is a regulatory module of the Mediator complex which is itself involved in regulation of basal and activated RNA polymerase II-dependent transcription. The SRB8-11 complex may be involved in the transcriptional repression of a subset of genes regulated by Mediator. It may inhibit the association of the Mediator complex with RNA polymerase II to form the holoenzyme complex. The SRB8-11 complex phosphorylates the C-terminal domain (CTD) of the largest subunit of RNA polymerase II. The polypeptide is RNA polymerase II holoenzyme cyclin-like subunit (SSN8) (Scheffersomyces stipitis (strain ATCC 58785 / CBS 6054 / NBRC 10063 / NRRL Y-11545) (Yeast)).